Reading from the N-terminus, the 206-residue chain is MAAAGASASGLILSRPVTFVTGNAKKLEEVRYILGQSIPFNSLKLDLPELQGEPEDISKEKARLAAIQVNGPVLVEDTCLCFNALKGLPGPYIKWFLQKIGHEGLNNLLMAYEDKSAYALCAFSFALGPDAEPVTFLGKTPGKIVPPRGPNDFGWDPIFQPDGYEQTYAEMPKEEKNKISHRYKALALVKSHFAKAGYVFQTDSPI.

Position 21–26 (21–26) interacts with ITP; that stretch reads TGNAKK. Glu49 is a binding site for Mg(2+). ITP contacts are provided by residues Lys61, 77 to 78, Lys94, 153 to 156, Lys176, and 181 to 182; these read DT, FGWD, and HR.

This sequence belongs to the HAM1 NTPase family. Homodimer. The cofactor is Mg(2+). Mn(2+) serves as cofactor.

It is found in the cytoplasm. It carries out the reaction ITP + H2O = IMP + diphosphate + H(+). The enzyme catalyses dITP + H2O = dIMP + diphosphate + H(+). The catalysed reaction is XTP + H2O = XMP + diphosphate + H(+). In terms of biological role, pyrophosphatase that hydrolyzes non-canonical purine nucleotides such as inosine triphosphate (ITP), deoxyinosine triphosphate (dITP) or xanthosine 5'-triphosphate (XTP) to their respective monophosphate derivatives. The enzyme does not distinguish between the deoxy- and ribose forms. Probably excludes non-canonical purines from RNA and DNA precursor pools, thus preventing their incorporation into RNA and DNA and avoiding chromosomal lesions. The sequence is that of Inosine triphosphate pyrophosphatase from Vitis vinifera (Grape).